The sequence spans 492 residues: Glutamyl-tRNA(Gln) amidotransferase subunit A (492 aa).

Residues lysine 79 and serine 154 each act as charge relay system in the active site. The active-site Acyl-ester intermediate is the serine 178.

Belongs to the amidase family. GatA subfamily. In terms of assembly, heterotrimer of A, B and C subunits.

The catalysed reaction is L-glutamyl-tRNA(Gln) + L-glutamine + ATP + H2O = L-glutaminyl-tRNA(Gln) + L-glutamate + ADP + phosphate + H(+). Allows the formation of correctly charged Gln-tRNA(Gln) through the transamidation of misacylated Glu-tRNA(Gln) in organisms which lack glutaminyl-tRNA synthetase. The reaction takes place in the presence of glutamine and ATP through an activated gamma-phospho-Glu-tRNA(Gln). In Acinetobacter baumannii (strain ACICU), this protein is Glutamyl-tRNA(Gln) amidotransferase subunit A.